A 557-amino-acid polypeptide reads, in one-letter code: Formate--tetrahydrofolate ligase (557 aa).

Residue 66–73 (TPAGEGKS) participates in ATP binding.

The protein belongs to the formate--tetrahydrofolate ligase family.

The catalysed reaction is (6S)-5,6,7,8-tetrahydrofolate + formate + ATP = (6R)-10-formyltetrahydrofolate + ADP + phosphate. The protein operates within one-carbon metabolism; tetrahydrofolate interconversion. The protein is Formate--tetrahydrofolate ligase of Clostridium botulinum (strain 657 / Type Ba4).